Consider the following 659-residue polypeptide: UvrABC system protein B (659 aa).

Residues 25–182 enclose the Helicase ATP-binding domain; that stretch reads QSIENGNRGQ…KKLIEIQYER (158 aa). Residue 38-45 participates in ATP binding; sequence GVTGSGKT. Residues 91–114 carry the Beta-hairpin motif; it reads YYDYYQPEAYVPQTDTFIEKDASI. In terms of domain architecture, Helicase C-terminal spans 429–582; it reads QIDDLYGEIQ…QMEYNEEHNI (154 aa). One can recognise a UVR domain in the interval 622–657; that stretch reads EKLIEQYEEEMKEAAKNLQFERAAELRDIIKDLKEN.

This sequence belongs to the UvrB family. In terms of assembly, forms a heterotetramer with UvrA during the search for lesions. Interacts with UvrC in an incision complex.

The protein localises to the cytoplasm. In terms of biological role, the UvrABC repair system catalyzes the recognition and processing of DNA lesions. A damage recognition complex composed of 2 UvrA and 2 UvrB subunits scans DNA for abnormalities. Upon binding of the UvrA(2)B(2) complex to a putative damaged site, the DNA wraps around one UvrB monomer. DNA wrap is dependent on ATP binding by UvrB and probably causes local melting of the DNA helix, facilitating insertion of UvrB beta-hairpin between the DNA strands. Then UvrB probes one DNA strand for the presence of a lesion. If a lesion is found the UvrA subunits dissociate and the UvrB-DNA preincision complex is formed. This complex is subsequently bound by UvrC and the second UvrB is released. If no lesion is found, the DNA wraps around the other UvrB subunit that will check the other stand for damage. The protein is UvrABC system protein B of Clostridium perfringens (strain SM101 / Type A).